Here is an 879-residue protein sequence, read N- to C-terminus: Beta-mannosidase (879 aa).

Residues 1 to 19 form the signal peptide; sequence MHLHLLLILALFRAGCVVA. N-linked (GlcNAc...) asparagine glycosylation is found at N35, N77, N89, and N113. A disulfide bridge connects residues C167 and C176. Residue 190 to 192 coordinates substrate; that stretch reads WDW. Residues N226, N297, and N302 are each glycosylated (N-linked (GlcNAc...) asparagine). Residue N456 participates in substrate binding. The active-site Proton donor is the E457. Cystine bridges form between C540–C629, C732–C761, and C764–C769. E554 serves as the catalytic Nucleophile. The N-linked (GlcNAc...) asparagine glycan is linked to N736. Residues N803 and N807 are each glycosylated (N-linked (GlcNAc...) asparagine).

Belongs to the glycosyl hydrolase 2 family. In terms of assembly, monomer. As to expression, highest level in liver, high levels in lung, testis, skin and spleen, moderate level in thymus. Activity found in plasma, kidney, liver, spleen, pancreas, brain, testis, epididymis, heart, lung and skeletal muscle.

Its subcellular location is the lysosome. It catalyses the reaction Hydrolysis of terminal, non-reducing beta-D-mannose residues in beta-D-mannosides.. It participates in glycan metabolism; N-glycan degradation. Exoglycosidase that cleaves the single beta-linked mannose residue from the non-reducing end of all N-linked glycoprotein oligosaccharides. This is Beta-mannosidase from Mus musculus (Mouse).